A 601-amino-acid chain; its full sequence is Potassium-transporting ATPase potassium-binding subunit (601 aa).

The next 12 helical transmembrane spans lie at 3–23 (ASAW…AWPL), 62–82 (HYAL…YALQ), 132–152 (LGLS…AFAL), 179–199 (AWVL…QGVI), 283–303 (LTNL…CFAF), 314–334 (VAIL…VTAA), 367–387 (FGIS…CGAV), 397–417 (LGGM…GGAG), 419–439 (GLYG…LMIG), 459–479 (VAIL…VLAP), 523–543 (VLLA…VLAI), and 564–584 (GPLF…LNYV).

Belongs to the KdpA family. As to quaternary structure, the system is composed of three essential subunits: KdpA, KdpB and KdpC.

It is found in the cell inner membrane. Part of the high-affinity ATP-driven potassium transport (or Kdp) system, which catalyzes the hydrolysis of ATP coupled with the electrogenic transport of potassium into the cytoplasm. This subunit binds the periplasmic potassium ions and delivers the ions to the membrane domain of KdpB through an intramembrane tunnel. The protein is Potassium-transporting ATPase potassium-binding subunit of Paracidovorax citrulli (strain AAC00-1) (Acidovorax citrulli).